We begin with the raw amino-acid sequence, 749 residues long: NAD(P)H-quinone oxidoreductase subunit 5, chloroplastic (749 aa).

The next 17 helical transmembrane spans lie at 9 to 29 (WIIP…LLLF), 40 to 60 (WAFQ…NLSI), 89 to 109 (IDPL…MVLI), 125 to 145 (FAYM…SNLI), 147 to 167 (IYIF…FWFT), 185 to 205 (GDFG…SFEF), 219 to 239 (NEVN…GAVA), 258 to 278 (TPIS…FLVA), 290 to 312 (IMNF…ALAQ), 327 to 347 (LGYM…FHLI), 354 to 374 (ALLF…VGYC), 396 to 416 (TSFL…CFWS), 425 to 445 (WLYS…TAFY), 549 to 569 (LFPI…GIPF), 608 to 628 (VFSV…YKPV), 694 to 714 (IIDG…EVIK), and 725 to 745 (LFFY…LNVF).

The protein belongs to the complex I subunit 5 family. In terms of assembly, NDH is composed of at least 16 different subunits, 5 of which are encoded in the nucleus.

The protein resides in the plastid. Its subcellular location is the chloroplast thylakoid membrane. It catalyses the reaction a plastoquinone + NADH + (n+1) H(+)(in) = a plastoquinol + NAD(+) + n H(+)(out). It carries out the reaction a plastoquinone + NADPH + (n+1) H(+)(in) = a plastoquinol + NADP(+) + n H(+)(out). Its function is as follows. NDH shuttles electrons from NAD(P)H:plastoquinone, via FMN and iron-sulfur (Fe-S) centers, to quinones in the photosynthetic chain and possibly in a chloroplast respiratory chain. The immediate electron acceptor for the enzyme in this species is believed to be plastoquinone. Couples the redox reaction to proton translocation, and thus conserves the redox energy in a proton gradient. The chain is NAD(P)H-quinone oxidoreductase subunit 5, chloroplastic (ndhF) from Atractylodes lancea (Atractylodes japonica).